The following is a 378-amino-acid chain: Erythronate-4-phosphate dehydrogenase (378 aa).

S45 and T66 together coordinate substrate. NAD(+) contacts are provided by D146 and T175. The active site involves R208. D232 lines the NAD(+) pocket. Residue E237 is part of the active site. The active-site Proton donor is the H254. An NAD(+)-binding site is contributed by G257. Y258 contacts substrate.

This sequence belongs to the D-isomer specific 2-hydroxyacid dehydrogenase family. PdxB subfamily. Homodimer.

The protein resides in the cytoplasm. The enzyme catalyses 4-phospho-D-erythronate + NAD(+) = (R)-3-hydroxy-2-oxo-4-phosphooxybutanoate + NADH + H(+). The protein operates within cofactor biosynthesis; pyridoxine 5'-phosphate biosynthesis; pyridoxine 5'-phosphate from D-erythrose 4-phosphate: step 2/5. Catalyzes the oxidation of erythronate-4-phosphate to 3-hydroxy-2-oxo-4-phosphonooxybutanoate. The sequence is that of Erythronate-4-phosphate dehydrogenase from Shigella boydii serotype 4 (strain Sb227).